The sequence spans 468 residues: ATP synthase subunit beta (468 aa).

Position 155-162 (glycine 155–threonine 162) interacts with ATP.

This sequence belongs to the ATPase alpha/beta chains family. As to quaternary structure, F-type ATPases have 2 components, CF(1) - the catalytic core - and CF(0) - the membrane proton channel. CF(1) has five subunits: alpha(3), beta(3), gamma(1), delta(1), epsilon(1). CF(0) has three main subunits: a(1), b(2) and c(9-12). The alpha and beta chains form an alternating ring which encloses part of the gamma chain. CF(1) is attached to CF(0) by a central stalk formed by the gamma and epsilon chains, while a peripheral stalk is formed by the delta and b chains.

It localises to the cell inner membrane. The catalysed reaction is ATP + H2O + 4 H(+)(in) = ADP + phosphate + 5 H(+)(out). Its function is as follows. Produces ATP from ADP in the presence of a proton gradient across the membrane. The catalytic sites are hosted primarily by the beta subunits. The protein is ATP synthase subunit beta of Bdellovibrio bacteriovorus (strain ATCC 15356 / DSM 50701 / NCIMB 9529 / HD100).